The following is a 364-amino-acid chain: Medium-wave-sensitive opsin 1 (364 aa).

The tract at residues 1-23 (MTQPWGPQMLAGGQPPESHEDST) is disordered. The Extracellular segment spans residues 1-52 (MTQPWGPQMLAGGQPPESHEDSTQASIFTYTNSNSTRGPFEGPNFHIAPRWV). The segment at 17-43 (ESHEDSTQASIFTYTNSNSTRGPFEGP) is required for 11-cis-retinal regeneration. N-linked (GlcNAc...) asparagine glycosylation occurs at Asn-34. The chain crosses the membrane as a helical span at residues 53-77 (YHLTSAWMILVVIASVFTNGLVLVA). Residues 78-89 (TMRFKKLRHPLN) are Cytoplasmic-facing. The helical transmembrane segment at 90-115 (WILVNLAVADLAETVIASTISVVNQF) threads the bilayer. Residues 116–129 (YGYFVLGHPLCVVE) lie on the Extracellular side of the membrane. An intrachain disulfide couples Cys-126 to Cys-203. Residues 130-149 (GYTVSLCGITGLWSLAIISW) form a helical membrane-spanning segment. The Cytoplasmic segment spans residues 150 to 168 (ERWLVVCKPFGNVRFDAKL). Residues 169–192 (AIAGIAFSWIWAAVWTAPPIFGWS) form a helical membrane-spanning segment. Over 193-218 (RYWPYGLKTSCGPDVFSGTSYPGVQS) the chain is Extracellular. Residues 219-246 (YMMVLMVTCCIIPLSVIVLCYLQVWMAI) traverse the membrane as a helical segment. The Cytoplasmic segment spans residues 247-268 (RTVAKQQKESESTQKAEKEVTR). Residues 269 to 292 (MVVVMVFAYCLCWGPYTFFACFAT) traverse the membrane as a helical segment. At 293-300 (AHPGYSFH) the chain is on the extracellular side. The helical transmembrane segment at 301 to 325 (PLVAAIPSYFAKSATIYNPIIYVFM) threads the bilayer. Position 312 is an N6-(retinylidene)lysine (Lys-312). Topologically, residues 326 to 364 (NRQFRNCILQLFGKKVEDSSELSSASRTEASSVSSVSPA) are cytoplasmic.

This sequence belongs to the G-protein coupled receptor 1 family. Opsin subfamily. In terms of assembly, monomer. Homodimer. Homotetramer. In terms of processing, O-glycosylated. Post-translationally, phosphorylated on some or all of the serine and threonine residues present in the C-terminal region. In terms of tissue distribution, expressed in cone photoreceptor cells.

The protein resides in the membrane. Its function is as follows. Visual pigments are the light-absorbing molecules that mediate vision. They consist of an apoprotein, opsin, covalently linked to cis-retinal. May increase spectral sensitivity in dim light. The protein is Medium-wave-sensitive opsin 1 (OPN1MW) of Oryctolagus cuniculus (Rabbit).